A 284-amino-acid chain; its full sequence is 4-diphosphocytidyl-2-C-methyl-D-erythritol kinase (284 aa).

Lys14 is an active-site residue. 97-107 provides a ligand contact to ATP; it reads PMGGGLGGGSS. Asp139 is an active-site residue.

The protein belongs to the GHMP kinase family. IspE subfamily.

It catalyses the reaction 4-CDP-2-C-methyl-D-erythritol + ATP = 4-CDP-2-C-methyl-D-erythritol 2-phosphate + ADP + H(+). It participates in isoprenoid biosynthesis; isopentenyl diphosphate biosynthesis via DXP pathway; isopentenyl diphosphate from 1-deoxy-D-xylulose 5-phosphate: step 3/6. Its function is as follows. Catalyzes the phosphorylation of the position 2 hydroxy group of 4-diphosphocytidyl-2C-methyl-D-erythritol. The protein is 4-diphosphocytidyl-2-C-methyl-D-erythritol kinase of Psychromonas ingrahamii (strain DSM 17664 / CCUG 51855 / 37).